The sequence spans 380 residues: L-lactate dehydrogenase (380 aa).

Positions 1-380 (MIISSPNDYR…TRDSLVGLPR (380 aa)) constitute an FMN hydroxy acid dehydrogenase domain. Tyrosine 24 contributes to the substrate binding site. FMN-binding residues include serine 106 and glutamine 127. Position 129 (tyrosine 129) interacts with substrate. Threonine 155 contributes to the FMN binding site. Arginine 164 is a binding site for substrate. FMN is bound at residue lysine 251. Residue histidine 275 is the Proton acceptor of the active site. Arginine 278 contacts substrate. 306-330 (DSGIRTGLDVVRMLALGAKGVLLGR) is an FMN binding site.

It belongs to the FMN-dependent alpha-hydroxy acid dehydrogenase family. Requires FMN as cofactor.

The protein localises to the cell inner membrane. The catalysed reaction is (S)-lactate + A = pyruvate + AH2. Catalyzes the conversion of L-lactate to pyruvate. Is coupled to the respiratory chain. The polypeptide is L-lactate dehydrogenase (Azorhizobium caulinodans (strain ATCC 43989 / DSM 5975 / JCM 20966 / LMG 6465 / NBRC 14845 / NCIMB 13405 / ORS 571)).